Reading from the N-terminus, the 331-residue chain is Inositol 2-dehydrogenase (331 aa).

It belongs to the Gfo/Idh/MocA family. In terms of assembly, homotetramer.

It catalyses the reaction myo-inositol + NAD(+) = scyllo-inosose + NADH + H(+). Functionally, involved in the oxidation of myo-inositol (MI) to 2-keto-myo-inositol (2KMI or 2-inosose). In Renibacterium salmoninarum (strain ATCC 33209 / DSM 20767 / JCM 11484 / NBRC 15589 / NCIMB 2235), this protein is Inositol 2-dehydrogenase.